A 107-amino-acid polypeptide reads, in one-letter code: 2Fe-2S ferredoxin CtmE (107 aa).

The 2Fe-2S ferredoxin-type domain occupies Val-3 to Glu-106. 4 residues coordinate [2Fe-2S] cluster: Cys-41, Cys-47, Cys-50, and Cys-87.

Belongs to the adrenodoxin/putidaredoxin family. It depends on [2Fe-2S] cluster as a cofactor.

It functions in the pathway terpene metabolism; monoterpene degradation. Functionally, involved in the degradation of the cyclic monoterpene limonene. Probably part of an electron transfer system involved in the oxidation of limonene to perillyl alcohol. This Castellaniella defragrans (strain DSM 12143 / CCUG 39792 / 65Phen) (Alcaligenes defragrans) protein is 2Fe-2S ferredoxin CtmE.